The chain runs to 189 residues: Probable nicotinate-nucleotide adenylyltransferase (189 aa).

It belongs to the NadD family.

It carries out the reaction nicotinate beta-D-ribonucleotide + ATP + H(+) = deamido-NAD(+) + diphosphate. Its pathway is cofactor biosynthesis; NAD(+) biosynthesis; deamido-NAD(+) from nicotinate D-ribonucleotide: step 1/1. Its function is as follows. Catalyzes the reversible adenylation of nicotinate mononucleotide (NaMN) to nicotinic acid adenine dinucleotide (NaAD). This Ruegeria sp. (strain TM1040) (Silicibacter sp.) protein is Probable nicotinate-nucleotide adenylyltransferase.